Consider the following 92-residue polypeptide: MTFTKSVDQTTILQGDRSKLKDLLRLRLNACGWSDQVRLLCREAIKEQDSINCDALVQQVTPKARALIPDTVKKELLQKIKTILVQQEGIDI.

This sequence belongs to the ENY2 family. In terms of assembly, component of the nuclear pore complex (NPC)-associated TREX-2 complex (transcription and export complex 2). Component of the SAGA transcription coactivator-HAT complex. Within the SAGA complex, participates in a subcomplex of SAGA called the DUB module (deubiquitination module).

It is found in the nucleus. It localises to the nucleoplasm. Involved in mRNA export coupled transcription activation by association with both the TREX-2 and the SAGA complexes. The transcription regulatory histone acetylation (HAT) complex SAGA is a multiprotein complex that activates transcription by remodeling chromatin and mediating histone acetylation and deubiquitination. Within the SAGA complex, participates in a subcomplex that specifically deubiquitinates histones. The SAGA complex is recruited to specific gene promoters by activators, where it is required for transcription. The TREX-2 complex functions in docking export-competent ribonucleoprotein particles (mRNPs) to the nuclear entrance of the nuclear pore complex (nuclear basket). TREX-2 participates in mRNA export and accurate chromatin positioning in the nucleus by tethering genes to the nuclear periphery. This is Enhancer of yellow 2 transcription factor from Aedes aegypti (Yellowfever mosquito).